We begin with the raw amino-acid sequence, 249 residues long: Hydroxyacylglutathione hydrolase (249 aa).

Zn(2+) contacts are provided by histidine 53, histidine 55, aspartate 57, histidine 58, histidine 110, aspartate 127, and histidine 165.

The protein belongs to the metallo-beta-lactamase superfamily. Glyoxalase II family. Monomer. Requires Zn(2+) as cofactor.

The enzyme catalyses an S-(2-hydroxyacyl)glutathione + H2O = a 2-hydroxy carboxylate + glutathione + H(+). It functions in the pathway secondary metabolite metabolism; methylglyoxal degradation; (R)-lactate from methylglyoxal: step 2/2. Thiolesterase that catalyzes the hydrolysis of S-D-lactoyl-glutathione to form glutathione and D-lactic acid. The sequence is that of Hydroxyacylglutathione hydrolase from Buchnera aphidicola subsp. Baizongia pistaciae (strain Bp).